A 286-amino-acid polypeptide reads, in one-letter code: uncharacterized protein (286 aa).

The HTH lysR-type domain occupies 1–58 (MLLEGIETLLVLSKEKTMSRTGSQLYISQSAVSKRIANLEKKLGKKLIVPAGRHIKLT). Residues 18–37 (MSRTGSQLYISQSAVSKRIA) constitute a DNA-binding region (H-T-H motif).

This sequence belongs to the LysR transcriptional regulatory family.

This is an uncharacterized protein from Vibrio cholerae serotype O1 (strain ATCC 39315 / El Tor Inaba N16961).